A 1019-amino-acid polypeptide reads, in one-letter code: MTLNNCASMKLEVHFQCKQDDDSEEEEQCTISSHWAFEQESKCGSLMGSSALLAPPSPSLLGTSSCESVLTELSAASLPAISASLSPESADQPLLGLVPSPSNQPFLSPPQGQEGSQDKVKKHYSRSFLKHLESLRRKEKGDSRQTEPEQCLATSEKATKASSFRTCRGFLSAGFHRAKNRVTTSARVRDGETQKAWEAWPVATFRHPQPIRRRDYLVHVPGDHKPGTFPRSLSIESLCPDEGRHLADWQSSRCWGYEGRRGSCGSTGSHASTYDNLPELYPAEPIQAEAEAEAEEGEGSYAHLDDILEHVWGLQQRVELWSQTMYPDLRPGDKEEEEEEEEEEEEATSSVEVATVEVEGQDEDLAQAESQAHRGFPTQVKEEVPLIVLDQAPNVVEPLVQAEAEAPAQAQDLEQEANSTAEPISASSLSVEEGHSISDTAVSSSELDSSGNSMNEADAADAPAGLQASVPRERRDSGVGASLTRPCRKLRWHSFQNSHRPSLNSESLEINRQFAGQINLLHKGSLLRLTGFMEKYTVPHKQAWVWSMPKFMKRNKTPDYRGHHVFGVPPLIHVQRTGQPLPQSIQQAMRYLRSQCLDQVGIFRKSGVKSRIQSLRQMNENSPDNVCYEGQSAYDVADLLKQYFRDLPEPIFTSKLTTTFLQIYQLLPKEQWLAAAQAATLLLPDENREVLQTLLYFLSDIASAEENQMTAGNLAVCLAPSIFHLNVSKKDSSSPRIKSKRSLVGRPGPRDLSENMAATQGLSHMISDCKKLFQVPQDMVVQLCGSYSAAELSPPGPALAELRQAQAAGVSLSLYMEESVQELLRDAAERFKGWTNVPGPQHTELACRKAPDGHPLRMWKASTEVAAPPAVVLHRVLRERALWDEDLLRAQVLEALMPGVELYHYVTDSMAPHPCRDFVVLRMWRSDLPRGGCLLVSQSLDPEQPVPESGVRALMLTSQYLMEPCGLGRSRLTHICRADLRGRSPDWYNKVFGHLCAMEVAKIRDSFPTLQAAGPETKL.

Disordered regions lie at residues 92–122 and 134–154; these read QPLL…KVKK and SLRR…CLAT. The span at 100–115 shows a compositional bias: polar residues; sequence SPSNQPFLSPPQGQEG. Residue Ser-108 is modified to Phosphoserine. Residues 134-147 are compositionally biased toward basic and acidic residues; sequence SLRRKEKGDSRQTE. Arg-168 is modified (asymmetric dimethylarginine). A phosphoserine mark is found at Ser-234 and Ser-237. 2 disordered regions span residues 325–355 and 406–482; these read MYPD…EVAT and APAQ…VGAS. Residues 334–347 are compositionally biased toward acidic residues; sequence KEEEEEEEEEEEEA. Composition is skewed to polar residues over residues 418–430 and 437–455; these read NSTA…SSLS and ISDT…NSMN. Residues Ser-494 and Ser-502 each carry the phosphoserine modification. The region spanning 569–773 is the Rho-GAP domain; sequence PPLIHVQRTG…HMISDCKKLF (205 aa). The interval 731-754 is disordered; that stretch reads DSSSPRIKSKRSLVGRPGPRDLSE. Residues 805-1013 form the START domain; it reads AQAAGVSLSL…RDSFPTLQAA (209 aa).

In terms of assembly, binds both the SH2 and PTB domains of TNS1.

The protein localises to the cell junction. The protein resides in the focal adhesion. Accelerates GTPase activity of RHOA and CDC42, but not RAC1. Stimulates the hydrolysis of phosphatidylinositol 4,5-bisphosphate by PLCD1. The protein is StAR-related lipid transfer protein 8 (Stard8) of Mus musculus (Mouse).